Here is a 201-residue protein sequence, read N- to C-terminus: Flavin prenyltransferase UbiX (201 aa).

Residues 23–25, Ser49, 103–106, and Arg138 each bind FMN; these read GAS and SIKT. Dimethylallyl phosphate is bound by residues Tyr168 and Lys184.

It belongs to the UbiX/PAD1 family.

The enzyme catalyses dimethylallyl phosphate + FMNH2 = prenylated FMNH2 + phosphate. Its function is as follows. Flavin prenyltransferase that catalyzes the synthesis of the prenylated FMN cofactor (prenyl-FMN) for 4-hydroxy-3-polyprenylbenzoic acid decarboxylase UbiD. The prenyltransferase is metal-independent and links a dimethylallyl moiety from dimethylallyl monophosphate (DMAP) to the flavin N5 and C6 atoms of FMN. This is Flavin prenyltransferase UbiX from Saccharolobus solfataricus (strain ATCC 35092 / DSM 1617 / JCM 11322 / P2) (Sulfolobus solfataricus).